The following is a 211-amino-acid chain: Protein-L-isoaspartate O-methyltransferase (211 aa).

The active site involves serine 60.

This sequence belongs to the methyltransferase superfamily. L-isoaspartyl/D-aspartyl protein methyltransferase family.

The protein resides in the cytoplasm. The catalysed reaction is [protein]-L-isoaspartate + S-adenosyl-L-methionine = [protein]-L-isoaspartate alpha-methyl ester + S-adenosyl-L-homocysteine. In terms of biological role, catalyzes the methyl esterification of L-isoaspartyl residues in peptides and proteins that result from spontaneous decomposition of normal L-aspartyl and L-asparaginyl residues. It plays a role in the repair and/or degradation of damaged proteins. The polypeptide is Protein-L-isoaspartate O-methyltransferase (Pseudomonas syringae pv. syringae (strain B728a)).